A 173-amino-acid polypeptide reads, in one-letter code: T cell receptor gamma constant 1 (173 aa).

Residues 10–104 (PKPTIFLPSI…NKNGVDQEII (95 aa)) form the Ig-like domain. Cysteines 32 and 88 form a disulfide. 4 N-linked (GlcNAc...) asparagine glycosylation sites follow: Asn66, Asn120, Asn126, and Asn135. The chain crosses the membrane as a helical span at residues 139–161 (YYMYLLLLLKSVVYFAIITCCLL).

In terms of assembly, gamma-delta TR is a heterodimer composed of a gamma and delta chain; disulfide-linked. The gamma-delta TR is associated with the transmembrane signaling CD3 coreceptor proteins following the stoichiometry: a single gamma-delta TR heterodimer associates with one CD3D-CD3E heterodimer, one CD3G-CD3E heterodimer and one CD247 homodimer forming a stable octameric structure. Upon activation, gamma-delta TR complex associates with FCER1G to initiate intracellular signaling.

Its subcellular location is the cell membrane. In terms of biological role, constant region of T cell receptor (TR) gamma chain that participates in the antigen recognition. Gamma-delta TRs recognize a variety of self and foreign non-peptide antigens frequently expressed at the epithelial boundaries between the host and external environment, including endogenous lipids presented by MH-like protein CD1D and phosphoantigens presented by butyrophilin-like molecule BTN3A1. Upon antigen recognition induces rapid, innate-like immune responses involved in pathogen clearance and tissue repair. Binding of gamma-delta TR complex to antigen triggers phosphorylation of immunoreceptor tyrosine-based activation motifs (ITAMs) in the CD3 chains by the LCK and FYN kinases, allowing the recruitment, phosphorylation, and activation of ZAP70 that facilitates phosphorylation of the scaffolding proteins LCP2 and LAT. This lead to the formation of a supramolecular signalosome that recruits the phospholipase PLCG1, resulting in calcium mobilization and ERK activation, ultimately leading to T cell expansion and differentiation into effector cells. Gamma-delta TRs are produced through somatic rearrangement of a limited repertoire of variable (V), diversity (D), and joining (J) genes. The potential diversity of gamma-delta TRs is conferred by the unique ability to rearrange (D) genes in tandem and to utilize all three reading frames. The combinatorial diversity is considerably increased by the sequence exonuclease trimming and random nucleotide (N) region additions which occur during the V-(D)-J rearrangements. The sequence is that of T cell receptor gamma constant 1 from Homo sapiens (Human).